The chain runs to 457 residues: Argininosuccinate lyase (457 aa).

Belongs to the lyase 1 family. Argininosuccinate lyase subfamily.

The protein resides in the cytoplasm. It catalyses the reaction 2-(N(omega)-L-arginino)succinate = fumarate + L-arginine. Its pathway is amino-acid biosynthesis; L-arginine biosynthesis; L-arginine from L-ornithine and carbamoyl phosphate: step 3/3. This is Argininosuccinate lyase from Yersinia pseudotuberculosis serotype O:1b (strain IP 31758).